A 374-amino-acid polypeptide reads, in one-letter code: Glycerophosphodiester phosphodiesterase GDPD2 (374 aa).

The 289-residue stretch at 38–326 folds into the GP-PDE domain; it reads FSVIGHRGIG…DFVEEIIEST (289 aa). The disordered stretch occupies residues 330 to 349; the sequence is MIRPPPSSSPLPSPSKDDDV. Over residues 332-342 the composition is skewed to pro residues; sequence RPPPSSSPLPS.

This sequence belongs to the glycerophosphoryl diester phosphodiesterase family. As to expression, expressed in roots, shoots, flowers and siliques.

The enzyme catalyses a sn-glycero-3-phosphodiester + H2O = an alcohol + sn-glycerol 3-phosphate + H(+). This chain is Glycerophosphodiester phosphodiesterase GDPD2, found in Arabidopsis thaliana (Mouse-ear cress).